A 414-amino-acid chain; its full sequence is Multifunctional CCA protein (414 aa).

The ATP site is built by glycine 8 and arginine 11. 2 residues coordinate CTP: glycine 8 and arginine 11. Mg(2+)-binding residues include aspartate 21 and aspartate 23. ATP-binding residues include arginine 91, arginine 137, and arginine 140. Residues arginine 91, arginine 137, and arginine 140 each coordinate CTP. Residues 228-329 (TGIHTLMTLA…LKLFDAVDVW (102 aa)) form the HD domain.

Belongs to the tRNA nucleotidyltransferase/poly(A) polymerase family. Bacterial CCA-adding enzyme type 1 subfamily. As to quaternary structure, monomer. Can also form homodimers and oligomers. Mg(2+) serves as cofactor. Ni(2+) is required as a cofactor.

It carries out the reaction a tRNA precursor + 2 CTP + ATP = a tRNA with a 3' CCA end + 3 diphosphate. It catalyses the reaction a tRNA with a 3' CCA end + 2 CTP + ATP = a tRNA with a 3' CCACCA end + 3 diphosphate. In terms of biological role, catalyzes the addition and repair of the essential 3'-terminal CCA sequence in tRNAs without using a nucleic acid template. Adds these three nucleotides in the order of C, C, and A to the tRNA nucleotide-73, using CTP and ATP as substrates and producing inorganic pyrophosphate. tRNA 3'-terminal CCA addition is required both for tRNA processing and repair. Also involved in tRNA surveillance by mediating tandem CCA addition to generate a CCACCA at the 3' terminus of unstable tRNAs. While stable tRNAs receive only 3'-terminal CCA, unstable tRNAs are marked with CCACCA and rapidly degraded. The polypeptide is Multifunctional CCA protein (Serratia proteamaculans (strain 568)).